Consider the following 239-residue polypeptide: Large ribosomal subunit protein uL2 (239 aa).

Positions Val200 to Lys239 are disordered. The span at Pro222–Lys239 shows a compositional bias: basic residues.

It belongs to the universal ribosomal protein uL2 family. In terms of assembly, part of the 50S ribosomal subunit. Forms a bridge to the 30S subunit in the 70S ribosome.

In terms of biological role, one of the primary rRNA binding proteins. Required for association of the 30S and 50S subunits to form the 70S ribosome, for tRNA binding and peptide bond formation. It has been suggested to have peptidyltransferase activity; this is somewhat controversial. Makes several contacts with the 16S rRNA in the 70S ribosome. The sequence is that of Large ribosomal subunit protein uL2 from Thermococcus kodakarensis (strain ATCC BAA-918 / JCM 12380 / KOD1) (Pyrococcus kodakaraensis (strain KOD1)).